The sequence spans 262 residues: MQQPIIGVGHSMGGCQIATLSVTSRRMFSTMILLDPAIGPPDMGLATLDLGQLTLRRRTQWPTREDAEKALRTSFSTWDSQVLNLLIKHSIHSDKQSIEMEDGPVSLVTGRYQELVNYIKPSFIRSGKVNGQELIHQTGPVDMYHMLGLVTCSALYLCGGESTLSVPRVRDLWLNRTAKLSYSKEPGETRKVDERIVPDTGHFLPMEEPKKCADIIADWIEKDKCIAWNCCVGKRGKTWCELSNASKEMSAEAWMKYLQSKL.

Positions 260-262 match the Peroxisomal targeting signal type 1 motif; the sequence is SKL.

It belongs to the AB hydrolase superfamily. AKT2 hydrolase family.

The protein resides in the peroxisome. It functions in the pathway mycotoxin biosynthesis. In terms of biological role, abhydrolase domain-containing protein; part of the gene clusters that mediate the biosynthesis of the host-selective toxins (HSTs) AK-toxins responsible for Japanese pear black spot disease by the Japanese pear pathotype. AK-toxins are esters of 9,10-epoxy 8-hydroxy 9-methyldecatrienoic acid (EDA). On cellular level, AK-toxins affect plasma membrane of susceptible cells and cause a sudden increase in loss of K(+) after a few minutes of toxin treatment. The acyl-CoA ligase AKT1, the hydrolase AKT2 and enoyl-CoA hydratase AKT3 are all involved in the biosynthesis of the AK-, AF- and ACT-toxin common 9,10-epoxy-8-hydroxy-9-methyl-decatrienoic acid (EDA) structural moiety. Part of the EDA biosynthesis occurs in the peroxisome since these 3 enzymes are localized in peroxisomes. The exact roles of the 3 enzymes, as well as of additional AK-toxin clusters enzymes, including AKT4, AKT6 and AKTS1, have still to be elucidated. The Cytochrome P450 monooxygenase AKT7 on the other side functions to limit production of EDA and AK-toxin, probably via the catalysis of a side reaction of EDA or its precursor. This is Abhydrolase domain-containing protein AKT2 from Alternaria alternata (Alternaria rot fungus).